We begin with the raw amino-acid sequence, 529 residues long: Peptide chain release factor 3 (529 aa).

Residues 11–280 form the tr-type G domain; the sequence is ARRRTFAIIS…GLVEWAPSPM (270 aa). GTP-binding positions include 20 to 27, 88 to 92, and 142 to 145; these read SHPDAGKT, DTPGH, and NKLD.

It belongs to the TRAFAC class translation factor GTPase superfamily. Classic translation factor GTPase family. PrfC subfamily.

It localises to the cytoplasm. Increases the formation of ribosomal termination complexes and stimulates activities of RF-1 and RF-2. It binds guanine nucleotides and has strong preference for UGA stop codons. It may interact directly with the ribosome. The stimulation of RF-1 and RF-2 is significantly reduced by GTP and GDP, but not by GMP. The protein is Peptide chain release factor 3 of Erwinia tasmaniensis (strain DSM 17950 / CFBP 7177 / CIP 109463 / NCPPB 4357 / Et1/99).